We begin with the raw amino-acid sequence, 27 residues long: MKIILWAVLIIFLIGLLVVTGVFKMIF.

The helical transmembrane segment at Ile3–Phe23 threads the bilayer.

The protein resides in the cell inner membrane. This is an uncharacterized protein from Escherichia coli (strain K12).